Consider the following 367-residue polypeptide: DNA replication and repair protein RecF (367 aa).

30-37 (GANGSGKT) contributes to the ATP binding site.

It belongs to the RecF family.

Its subcellular location is the cytoplasm. Its function is as follows. The RecF protein is involved in DNA metabolism; it is required for DNA replication and normal SOS inducibility. RecF binds preferentially to single-stranded, linear DNA. It also seems to bind ATP. The protein is DNA replication and repair protein RecF of Pseudomonas putida (strain ATCC 47054 / DSM 6125 / CFBP 8728 / NCIMB 11950 / KT2440).